Here is a 132-residue protein sequence, read N- to C-terminus: Small ribosomal subunit protein uS8 (132 aa).

This sequence belongs to the universal ribosomal protein uS8 family. Part of the 30S ribosomal subunit. Contacts proteins S5 and S12.

Its function is as follows. One of the primary rRNA binding proteins, it binds directly to 16S rRNA central domain where it helps coordinate assembly of the platform of the 30S subunit. This is Small ribosomal subunit protein uS8 from Nitrobacter winogradskyi (strain ATCC 25391 / DSM 10237 / CIP 104748 / NCIMB 11846 / Nb-255).